The sequence spans 890 residues: UPF0182 protein SYNW1212 (890 aa).

The next 8 helical transmembrane spans lie at 21–41 (WLLQ…AIRW), 64–84 (LTLL…NGLI), 98–118 (WQVS…LVAV), 134–154 (AVVL…SIPL), 173–193 (FAAL…CLGN), 219–239 (RLLM…CWLS), 268–288 (LLTV…SLLL), and 295–315 (VLAV…WLIL).

The protein belongs to the UPF0182 family.

Its subcellular location is the cell membrane. The protein is UPF0182 protein SYNW1212 of Parasynechococcus marenigrum (strain WH8102).